Consider the following 211-residue polypeptide: Uridine kinase (211 aa).

12–19 (GGSGSGKT) contributes to the ATP binding site.

This sequence belongs to the uridine kinase family.

It localises to the cytoplasm. The enzyme catalyses uridine + ATP = UMP + ADP + H(+). The catalysed reaction is cytidine + ATP = CMP + ADP + H(+). It functions in the pathway pyrimidine metabolism; CTP biosynthesis via salvage pathway; CTP from cytidine: step 1/3. Its pathway is pyrimidine metabolism; UMP biosynthesis via salvage pathway; UMP from uridine: step 1/1. The chain is Uridine kinase from Geobacillus sp. (strain WCH70).